The following is a 493-amino-acid chain: Lysine--tRNA ligase (493 aa).

The 'HIGH' region signature appears at 26-34 (PSGHIHLGN). The short motif at 270–274 (AMKSS) is the 'KMSKS' region element.

This sequence belongs to the class-I aminoacyl-tRNA synthetase family.

It localises to the cytoplasm. The catalysed reaction is tRNA(Lys) + L-lysine + ATP = L-lysyl-tRNA(Lys) + AMP + diphosphate. This chain is Lysine--tRNA ligase (lysS), found in Archaeoglobus fulgidus (strain ATCC 49558 / DSM 4304 / JCM 9628 / NBRC 100126 / VC-16).